A 286-amino-acid chain; its full sequence is Uridylate cyclase (286 aa).

The Guanylate cyclase domain occupies 90 to 223; the sequence is TAIFVDIRKS…DAVTKAANMS (134 aa). Residue Phe-93 coordinates a ribonucleoside 5'-triphosphate. The Mn(2+) site is built by Asp-95, Ile-96, and Asp-140.

The protein belongs to the adenylyl cyclase class-4/guanylyl cyclase family. Pyrimidine cyclase subfamily. Homodimer. Mn(2+) serves as cofactor.

The protein localises to the cytoplasm. It carries out the reaction UTP = 3',5'-cyclic UMP + diphosphate. In terms of biological role, pycsar (pyrimidine cyclase system for antiphage resistance) provides immunity against bacteriophage. The pyrimidine cyclase (PycC) synthesizes cyclic nucleotides in response to infection; these serve as specific second messenger signals. The signals activate the adjacent effector, leading to bacterial cell death and abortive phage infection. A clade C Pycsar system. The pyrimidine cyclase gene of a two-gene Pycsar system, weakly generates cyclic UMP (cUMP) from UTP, has little to no activity on ATP, CTP or GTP. Expression of this and adjacent effector TpPycTM (AC A0A1T4LJG1) probably confers resistance to bacteriophage. The genes are probably only expressed in response to bacteriophage infection. The protein is Uridylate cyclase of Treponema porcinum.